A 382-amino-acid chain; its full sequence is Queuine tRNA-ribosyltransferase (382 aa).

The Proton acceptor role is filled by Asp-96. Residues 96 to 100 (DSGGF), Asp-151, Gln-194, and Gly-221 each bind substrate. Residues 252–258 (GVGAPDS) are RNA binding. Catalysis depends on Asp-271, which acts as the Nucleophile. The tract at residues 276–280 (TRIAR) is RNA binding; important for wobble base 34 recognition. 4 residues coordinate Zn(2+): Cys-309, Cys-311, Cys-314, and His-340.

This sequence belongs to the queuine tRNA-ribosyltransferase family. Homodimer. Within each dimer, one monomer is responsible for RNA recognition and catalysis, while the other monomer binds to the replacement base PreQ1. Zn(2+) is required as a cofactor.

It carries out the reaction 7-aminomethyl-7-carbaguanine + guanosine(34) in tRNA = 7-aminomethyl-7-carbaguanosine(34) in tRNA + guanine. It functions in the pathway tRNA modification; tRNA-queuosine biosynthesis. Its function is as follows. Catalyzes the base-exchange of a guanine (G) residue with the queuine precursor 7-aminomethyl-7-deazaguanine (PreQ1) at position 34 (anticodon wobble position) in tRNAs with GU(N) anticodons (tRNA-Asp, -Asn, -His and -Tyr). Catalysis occurs through a double-displacement mechanism. The nucleophile active site attacks the C1' of nucleotide 34 to detach the guanine base from the RNA, forming a covalent enzyme-RNA intermediate. The proton acceptor active site deprotonates the incoming PreQ1, allowing a nucleophilic attack on the C1' of the ribose to form the product. After dissociation, two additional enzymatic reactions on the tRNA convert PreQ1 to queuine (Q), resulting in the hypermodified nucleoside queuosine (7-(((4,5-cis-dihydroxy-2-cyclopenten-1-yl)amino)methyl)-7-deazaguanosine). This Lactococcus lactis subsp. cremoris (strain SK11) protein is Queuine tRNA-ribosyltransferase.